Consider the following 360-residue polypeptide: DNA replication and repair protein RecF (360 aa).

Position 33 to 40 (33 to 40 (GENGSGKT)) interacts with ATP.

Belongs to the RecF family.

It is found in the cytoplasm. In terms of biological role, the RecF protein is involved in DNA metabolism; it is required for DNA replication and normal SOS inducibility. RecF binds preferentially to single-stranded, linear DNA. It also seems to bind ATP. This chain is DNA replication and repair protein RecF, found in Rickettsia canadensis (strain McKiel).